Here is a 132-residue protein sequence, read N- to C-terminus: Lectin OAA (132 aa).

2 tandem repeats follow at residues 1–66 and 67–132. Residues 1–132 are 2 X approximate tandem repeats; sequence ALYNVENQWG…GPIGFKGTTL (132 aa).

As to quaternary structure, monomer.

Functionally, lectin specific for high mannose N-glycans, recognizes the branched moiety of these glycans. Does not recognize other types of N-glycans or monosaccharides. Agglutinates trypsin-treated rabbit erythrocytes. Does not require divalent cations for activity. Inhibits HIV replication in MT4 cells with an EC(50) of 45 nM. Binds to the HIV envelope glycoprotein gp120. The protein is Lectin OAA of Planktothrix agardhii (Oscillatoria agardhii).